A 444-amino-acid polypeptide reads, in one-letter code: Ras-related protein RabX (444 aa).

Residue 29–36 coordinates GTP; it reads GGDVCSKN. Positions 51-58 match the Effector region motif; the sequence is LIQVFDDY. 73 to 77 provides a ligand contact to GTP; that stretch reads EFSSI. Residues 91-136 form a disordered region; the sequence is ENNKNKNNNNNYNYNNNNYNNNNNNNNNNNNNNNNNNNNNNNNNNS. A compositionally biased stretch (low complexity) spans 95–135; the sequence is NKNNNNNYNYNNNNYNNNNNNNNNNNNNNNNNNNNNNNNNN. Residue 207–210 coordinates GTP; it reads NDSN. Disordered stretches follow at residues 213–232 and 298–401; these read TPNFSDSSSSSSSSSSSNII and LQGD…NNDL. Composition is skewed to low complexity over residues 217–232 and 303–399; these read SDSSSSSSSSSSSNII and NNNN…TYNN. A lipid anchor (S-palmitoyl cysteine) is attached at C439. At C441 the chain carries Cysteine methyl ester. The S-geranylgeranyl cysteine moiety is linked to residue C441. The propeptide at 442-444 is removed in mature form; it reads NLM.

The protein belongs to the small GTPase superfamily. Rab family.

The protein resides in the cell membrane. The protein is Ras-related protein RabX (rabX) of Dictyostelium discoideum (Social amoeba).